Here is a 676-residue protein sequence, read N- to C-terminus: DNA ligase (676 aa).

NAD(+) contacts are provided by residues 35-39 (DAVYD), 84-85 (SL), and Glu-115. The active-site N6-AMP-lysine intermediate is Lys-117. NAD(+)-binding residues include Arg-138, Glu-177, Lys-296, and Lys-320. 4 residues coordinate Zn(2+): Cys-414, Cys-417, Cys-432, and Cys-437. Residues 599-676 (NANLKLVGKT…SEAELLKILA (78 aa)) enclose the BRCT domain.

Belongs to the NAD-dependent DNA ligase family. LigA subfamily. The cofactor is Mg(2+). Mn(2+) is required as a cofactor.

It catalyses the reaction NAD(+) + (deoxyribonucleotide)n-3'-hydroxyl + 5'-phospho-(deoxyribonucleotide)m = (deoxyribonucleotide)n+m + AMP + beta-nicotinamide D-nucleotide.. DNA ligase that catalyzes the formation of phosphodiester linkages between 5'-phosphoryl and 3'-hydroxyl groups in double-stranded DNA using NAD as a coenzyme and as the energy source for the reaction. It is essential for DNA replication and repair of damaged DNA. This Trichormus variabilis (strain ATCC 29413 / PCC 7937) (Anabaena variabilis) protein is DNA ligase.